A 518-amino-acid polypeptide reads, in one-letter code: Bifunctional purine biosynthesis protein PurH (518 aa).

One can recognise an MGS-like domain in the interval 1–144 (MSKRALISVS…KNHAAVTVVC (144 aa)).

Belongs to the PurH family.

It catalyses the reaction (6R)-10-formyltetrahydrofolate + 5-amino-1-(5-phospho-beta-D-ribosyl)imidazole-4-carboxamide = 5-formamido-1-(5-phospho-D-ribosyl)imidazole-4-carboxamide + (6S)-5,6,7,8-tetrahydrofolate. It carries out the reaction IMP + H2O = 5-formamido-1-(5-phospho-D-ribosyl)imidazole-4-carboxamide. It participates in purine metabolism; IMP biosynthesis via de novo pathway; 5-formamido-1-(5-phospho-D-ribosyl)imidazole-4-carboxamide from 5-amino-1-(5-phospho-D-ribosyl)imidazole-4-carboxamide (10-formyl THF route): step 1/1. It functions in the pathway purine metabolism; IMP biosynthesis via de novo pathway; IMP from 5-formamido-1-(5-phospho-D-ribosyl)imidazole-4-carboxamide: step 1/1. This is Bifunctional purine biosynthesis protein PurH from Lactococcus lactis subsp. cremoris (strain MG1363).